Here is a 404-residue protein sequence, read N- to C-terminus: MMTYEYILVRYGEMTTKGKNRSKFVSTLKDNVKFKLKKFPNIKIDATHDRMYIQLNGEDHEAISERLKDVFGIHKFNLAMKVPSELEDIKKGALAAFLQVKDDVKTFKITVHRSDKRFPMKTMELLPEIGGHILENTEDITVDVHNPDVNVRIEIRSGYSYIMCGEHMGAGGLPVGVGGKVMVLLSGGIDSPVAAYLTMKRGVSVEAVHFHSPPFTSERAKQKVIDLAQGLTKYCKRVTLHLVPFTEVQKTINKEIPSSYSMTVMRRMMMRITEQIAEERNALAITTGESLGQVASQTLDSMHTINEVTNYPVIRPLITMDKLEIIKIAEEIGTYDISIRPYEDCCTVFTPASPATKPKREKANRFEAKYDFTPLIEEAVANKETMVLQTVEVVAEEEKFEELF.

The 106-residue stretch at 61-166 folds into the THUMP domain; that stretch reads EAISERLKDV…SGYSYIMCGE (106 aa). Residues 184 to 185, 209 to 210, R266, G288, and Q297 each bind ATP; these read LL and HF.

This sequence belongs to the ThiI family.

The protein localises to the cytoplasm. It carries out the reaction [ThiI sulfur-carrier protein]-S-sulfanyl-L-cysteine + a uridine in tRNA + 2 reduced [2Fe-2S]-[ferredoxin] + ATP + H(+) = [ThiI sulfur-carrier protein]-L-cysteine + a 4-thiouridine in tRNA + 2 oxidized [2Fe-2S]-[ferredoxin] + AMP + diphosphate. The enzyme catalyses [ThiS sulfur-carrier protein]-C-terminal Gly-Gly-AMP + S-sulfanyl-L-cysteinyl-[cysteine desulfurase] + AH2 = [ThiS sulfur-carrier protein]-C-terminal-Gly-aminoethanethioate + L-cysteinyl-[cysteine desulfurase] + A + AMP + 2 H(+). It functions in the pathway cofactor biosynthesis; thiamine diphosphate biosynthesis. In terms of biological role, catalyzes the ATP-dependent transfer of a sulfur to tRNA to produce 4-thiouridine in position 8 of tRNAs, which functions as a near-UV photosensor. Also catalyzes the transfer of sulfur to the sulfur carrier protein ThiS, forming ThiS-thiocarboxylate. This is a step in the synthesis of thiazole, in the thiamine biosynthesis pathway. The sulfur is donated as persulfide by IscS. The protein is Probable tRNA sulfurtransferase of Bacillus cereus (strain G9842).